The chain runs to 102 residues: MRRGELWFAATPGGDRPVLVLTRDPVADRIGAVVVVALTRTRRGLVSELELTAVENRVPSDCVVNFDNIHTLPRTAFRRRITRLSPARLHEACQTLRASTGC.

It belongs to the PemK/MazF family. In terms of assembly, forms a complex with cognate antitoxin MazE2.

Its function is as follows. Toxic component of a type II toxin-antitoxin (TA) system. Acts as an endoribonuclease. Neutralized by coexpression with cognate antitoxin MazE2. This chain is Probable endoribonuclease MazF2 (mazF2), found in Mycobacterium tuberculosis (strain CDC 1551 / Oshkosh).